The primary structure comprises 398 residues: 4-hydroxy-3-methylbut-2-enyl diphosphate reductase (398 aa).

Position 66 (Cys-66) interacts with [4Fe-4S] cluster. Residue His-96 participates in (2E)-4-hydroxy-3-methylbut-2-enyl diphosphate binding. His-96 is a binding site for dimethylallyl diphosphate. His-96 lines the isopentenyl diphosphate pocket. Cys-157 is a [4Fe-4S] cluster binding site. His-185 contacts (2E)-4-hydroxy-3-methylbut-2-enyl diphosphate. A dimethylallyl diphosphate-binding site is contributed by His-185. Residue His-185 participates in isopentenyl diphosphate binding. The active-site Proton donor is the Glu-187. Thr-250 lines the (2E)-4-hydroxy-3-methylbut-2-enyl diphosphate pocket. Position 288 (Cys-288) interacts with [4Fe-4S] cluster. 4 residues coordinate (2E)-4-hydroxy-3-methylbut-2-enyl diphosphate: Ser-317, Ser-318, Asn-319, and Ser-379. Dimethylallyl diphosphate contacts are provided by Ser-317, Ser-318, Asn-319, and Ser-379. The isopentenyl diphosphate site is built by Ser-317, Ser-318, Asn-319, and Ser-379.

It belongs to the IspH family. [4Fe-4S] cluster is required as a cofactor.

The catalysed reaction is isopentenyl diphosphate + 2 oxidized [2Fe-2S]-[ferredoxin] + H2O = (2E)-4-hydroxy-3-methylbut-2-enyl diphosphate + 2 reduced [2Fe-2S]-[ferredoxin] + 2 H(+). It carries out the reaction dimethylallyl diphosphate + 2 oxidized [2Fe-2S]-[ferredoxin] + H2O = (2E)-4-hydroxy-3-methylbut-2-enyl diphosphate + 2 reduced [2Fe-2S]-[ferredoxin] + 2 H(+). It functions in the pathway isoprenoid biosynthesis; dimethylallyl diphosphate biosynthesis; dimethylallyl diphosphate from (2E)-4-hydroxy-3-methylbutenyl diphosphate: step 1/1. It participates in isoprenoid biosynthesis; isopentenyl diphosphate biosynthesis via DXP pathway; isopentenyl diphosphate from 1-deoxy-D-xylulose 5-phosphate: step 6/6. Catalyzes the conversion of 1-hydroxy-2-methyl-2-(E)-butenyl 4-diphosphate (HMBPP) into a mixture of isopentenyl diphosphate (IPP) and dimethylallyl diphosphate (DMAPP). Acts in the terminal step of the DOXP/MEP pathway for isoprenoid precursor biosynthesis. This Prochlorococcus marinus (strain MIT 9313) protein is 4-hydroxy-3-methylbut-2-enyl diphosphate reductase.